Here is a 104-residue protein sequence, read N- to C-terminus: Large ribosomal subunit protein uL24 (104 aa).

This sequence belongs to the universal ribosomal protein uL24 family. In terms of assembly, part of the 50S ribosomal subunit.

Its function is as follows. One of two assembly initiator proteins, it binds directly to the 5'-end of the 23S rRNA, where it nucleates assembly of the 50S subunit. One of the proteins that surrounds the polypeptide exit tunnel on the outside of the subunit. In Pseudoalteromonas atlantica (strain T6c / ATCC BAA-1087), this protein is Large ribosomal subunit protein uL24.